A 490-amino-acid chain; its full sequence is MVPVVALVGRPNVGKSTLFNRLTRTRDALVADFPGLTRDRKYGRAEIEGREFICIDTGGIDGTEDGVETRMAEQSLLAIEEADVVLFMVDARSGLMPADEAIAKHLRSREKPTFLVANKTDGLDPDQAVVDFYALGLGEIYPIAASHGRGVLSLLEHVLLPWMEDLAPQEEVDEDAEYWAQFEAEENGEEEEEDDFDPQSLPIKLAIVGRPNVGKSTLTNRILGEERVVVYDMPGTTRDSIYIPMERDGREYVLIDTAGVRKRGKITDAVEKFSVIKTLQAIEDANVVMLVIDAREGISDQDLSLLGFILNSGRSLVIVVNKWDGLSQEVKEQVKETLDFRLGFIDFARVHFISALHGSGVGNLFESVREAYDSSTRRVGTSMLTRIMTMAVEDHQPPLVRGRRVKLKYAHAGGYNPPIVVIHGNQVKDLPDSYKRYLMNYFRKSLDVMGSPIRIQFKEGENPYANKRNTLTPTQMRKRKRLMKHIKKSK.

EngA-type G domains follow at residues 3–166 (PVVA…MEDL) and 203–376 (IKLA…DSST). Residues 9-16 (GRPNVGKS), 56-60 (DTGGI), 118-121 (NKTD), 209-216 (GRPNVGKS), 256-260 (DTAGV), and 321-324 (NKWD) contribute to the GTP site. A KH-like domain is found at 377 to 461 (RRVGTSMLTR…PIRIQFKEGE (85 aa)).

The protein belongs to the TRAFAC class TrmE-Era-EngA-EngB-Septin-like GTPase superfamily. EngA (Der) GTPase family. As to quaternary structure, associates with the 50S ribosomal subunit.

Its function is as follows. GTPase that plays an essential role in the late steps of ribosome biogenesis. This chain is GTPase Der, found in Escherichia coli O81 (strain ED1a).